Reading from the N-terminus, the 235-residue chain is DNA repair protein RecO (235 aa).

The protein belongs to the RecO family.

Its function is as follows. Involved in DNA repair and RecF pathway recombination. The sequence is that of DNA repair protein RecO from Enterobacter sp. (strain 638).